The chain runs to 187 residues: Interferon beta (187 aa).

The N-terminal stretch at 1-21 (MTSRSLLPFVLSLLLPRIIMA) is a signal peptide. Position 24 is a phosphotyrosine (Y24). Cysteines 53 and 162 form a disulfide. N-linked (GlcNAc...) asparagine glycans are attached at residues N76, N95, N132, and N158.

It belongs to the alpha/beta interferon family. Monomer.

The protein resides in the secreted. Functionally, type I interferon cytokine that plays a key role in the innate immune response to infection, developing tumors and other inflammatory stimuli. Signals via binding to high-affinity (IFNAR2) and low-affinity (IFNAR1) heterodimeric receptor, activating the canonical Jak-STAT signaling pathway resulting in transcriptional activation or repression of interferon-regulated genes that encode the effectors of the interferon response, such as antiviral proteins, regulators of cell proliferation and differentiation, and immunoregulatory proteins. Signals mostly via binding to a IFNAR1-IFNAR2 heterodimeric receptor, but can also function with IFNAR1 alone and independently of Jak-STAT pathways. Elicits a wide variety of responses, including antiviral and antibacterial activities, and can regulate the development of B-cells, myelopoiesis and lipopolysaccharide (LPS)-inducible production of tumor necrosis factor. Plays a role in neuronal homeostasis by regulating dopamine turnover and protecting dopaminergic neurons: acts by promoting neuronal autophagy and alpha-synuclein clearance, thereby preventing dopaminergic neuron loss. IFNB1 is more potent than interferon-alpha (IFN-alpha) in inducing the apoptotic and antiproliferative pathways required for control of tumor cell growth. In Tachyglossus aculeatus aculeatus (Southeast Australian short-beaked echidna), this protein is Interferon beta (IFNB1).